The following is a 111-amino-acid chain: uncharacterized protein (111 aa).

Helical transmembrane passes span 4–21 (FITALPIVLLLGFSFVSF), 28–47 (LVYFRLALGLFSLVGLYMIY), 51–73 (TGIRYFIIYLYASWIVLAAVTAF), and 80–102 (SFFFGGLVMTMGYLTYMLIYLGM).

The protein resides in the cell membrane. This is an uncharacterized protein from Bacillus subtilis (strain 168).